The following is a 324-amino-acid chain: MWRSVIAGCGSYLPANKVTNANLAERVETTDAWIRERTGILVRHFAAEGEKTSDLAMAAARAALADAGVDAAEVDLIVLATATPDQTFPATATRVQAGLGCRPGAPAFDIQAVCSGFLYALSVADALIKAGQARTALVIGAETFSRILDFTDRTTCVLFGDGAGAVVLRATPSTGDGGERGILSTHLHADGRHHDLLYVDGGPSSTGTVGHLRMQGREVFRHAVTNLYEVVLEALAANGLQADAIDWVVPHQANQRILDGTAKKLGIDPAKVISTIALHANTSAASVPLALCEARRDGRIQPGQLILLEAMGGGFTWGSALVRL.

Active-site residues include cysteine 114 and histidine 251. An ACP-binding region spans residues 252 to 256 (QANQR). The active site involves asparagine 281.

This sequence belongs to the thiolase-like superfamily. FabH family. As to quaternary structure, homodimer.

It localises to the cytoplasm. The catalysed reaction is malonyl-[ACP] + acetyl-CoA + H(+) = 3-oxobutanoyl-[ACP] + CO2 + CoA. The protein operates within lipid metabolism; fatty acid biosynthesis. Catalyzes the condensation reaction of fatty acid synthesis by the addition to an acyl acceptor of two carbons from malonyl-ACP. Catalyzes the first condensation reaction which initiates fatty acid synthesis and may therefore play a role in governing the total rate of fatty acid production. Possesses both acetoacetyl-ACP synthase and acetyl transacylase activities. Its substrate specificity determines the biosynthesis of branched-chain and/or straight-chain of fatty acids. The sequence is that of Beta-ketoacyl-[acyl-carrier-protein] synthase III from Rhodospirillum rubrum (strain ATCC 11170 / ATH 1.1.1 / DSM 467 / LMG 4362 / NCIMB 8255 / S1).